A 309-amino-acid chain; its full sequence is Homoserine kinase (309 aa).

Residue 91-101 (PIGSGLGSSAC) participates in ATP binding.

Belongs to the GHMP kinase family. Homoserine kinase subfamily.

It localises to the cytoplasm. The enzyme catalyses L-homoserine + ATP = O-phospho-L-homoserine + ADP + H(+). The protein operates within amino-acid biosynthesis; L-threonine biosynthesis; L-threonine from L-aspartate: step 4/5. Catalyzes the ATP-dependent phosphorylation of L-homoserine to L-homoserine phosphate. The chain is Homoserine kinase from Escherichia fergusonii (strain ATCC 35469 / DSM 13698 / CCUG 18766 / IAM 14443 / JCM 21226 / LMG 7866 / NBRC 102419 / NCTC 12128 / CDC 0568-73).